Consider the following 330-residue polypeptide: DNA-directed RNA polymerase subunit alpha (330 aa).

Residues 1–237 (MYTEINEMLT…RQLHAFVDMK (237 aa)) form an alpha N-terminal domain (alpha-NTD) region. The tract at residues 251–330 (FDPVLLRSVD…ENWPPASLGE (80 aa)) is alpha C-terminal domain (alpha-CTD).

It belongs to the RNA polymerase alpha chain family. In terms of assembly, homodimer. The RNAP catalytic core consists of 2 alpha, 1 beta, 1 beta' and 1 omega subunit. When a sigma factor is associated with the core the holoenzyme is formed, which can initiate transcription.

It carries out the reaction RNA(n) + a ribonucleoside 5'-triphosphate = RNA(n+1) + diphosphate. Functionally, DNA-dependent RNA polymerase catalyzes the transcription of DNA into RNA using the four ribonucleoside triphosphates as substrates. The chain is DNA-directed RNA polymerase subunit alpha from Legionella pneumophila subsp. pneumophila (strain Philadelphia 1 / ATCC 33152 / DSM 7513).